Consider the following 440-residue polypeptide: Chromosomal replication initiator protein DnaA (440 aa).

A domain I, interacts with DnaA modulators region spans residues 1–69 (MKERILQEIK…VKVVLGNDAT (69 aa)). The tract at residues 69–96 (TFEITYEAFEPHSSYSEPLVKKRAVLLT) is domain II. The segment at 97–313 (PLNPDYTFEN…GAIIKLLVYK (217 aa)) is domain III, AAA+ region. Residues G140, G142, K143, and T144 each coordinate ATP. Residues 314 to 440 (ETTGKEVDLR…GEISKRALSG (127 aa)) are domain IV, binds dsDNA.

The protein belongs to the DnaA family. Oligomerizes as a right-handed, spiral filament on DNA at oriC.

The protein localises to the cytoplasm. In terms of biological role, plays an essential role in the initiation and regulation of chromosomal replication. ATP-DnaA binds to the origin of replication (oriC) to initiate formation of the DNA replication initiation complex once per cell cycle. Binds the DnaA box (a 9 base pair repeat at the origin) and separates the double-stranded (ds)DNA. Forms a right-handed helical filament on oriC DNA; dsDNA binds to the exterior of the filament while single-stranded (ss)DNA is stabiized in the filament's interior. The ATP-DnaA-oriC complex binds and stabilizes one strand of the AT-rich DNA unwinding element (DUE), permitting loading of DNA polymerase. After initiation quickly degrades to an ADP-DnaA complex that is not apt for DNA replication. Binds acidic phospholipids. In Thermotoga petrophila (strain ATCC BAA-488 / DSM 13995 / JCM 10881 / RKU-1), this protein is Chromosomal replication initiator protein DnaA.